A 374-amino-acid polypeptide reads, in one-letter code: Queuine tRNA-ribosyltransferase (374 aa).

Aspartate 89 acts as the Proton acceptor in catalysis. Residues 89–93 (DSGGF), aspartate 143, glutamine 187, and glycine 214 contribute to the substrate site. An RNA binding region spans residues 245–251 (GVGKPED). Aspartate 264 functions as the Nucleophile in the catalytic mechanism. The RNA binding; important for wobble base 34 recognition stretch occupies residues 269-273 (TRNAR). 4 residues coordinate Zn(2+): cysteine 302, cysteine 304, cysteine 307, and histidine 333.

It belongs to the queuine tRNA-ribosyltransferase family. In terms of assembly, homodimer. Within each dimer, one monomer is responsible for RNA recognition and catalysis, while the other monomer binds to the replacement base PreQ1. Requires Zn(2+) as cofactor.

It catalyses the reaction 7-aminomethyl-7-carbaguanine + guanosine(34) in tRNA = 7-aminomethyl-7-carbaguanosine(34) in tRNA + guanine. It participates in tRNA modification; tRNA-queuosine biosynthesis. In terms of biological role, catalyzes the base-exchange of a guanine (G) residue with the queuine precursor 7-aminomethyl-7-deazaguanine (PreQ1) at position 34 (anticodon wobble position) in tRNAs with GU(N) anticodons (tRNA-Asp, -Asn, -His and -Tyr). Catalysis occurs through a double-displacement mechanism. The nucleophile active site attacks the C1' of nucleotide 34 to detach the guanine base from the RNA, forming a covalent enzyme-RNA intermediate. The proton acceptor active site deprotonates the incoming PreQ1, allowing a nucleophilic attack on the C1' of the ribose to form the product. After dissociation, two additional enzymatic reactions on the tRNA convert PreQ1 to queuine (Q), resulting in the hypermodified nucleoside queuosine (7-(((4,5-cis-dihydroxy-2-cyclopenten-1-yl)amino)methyl)-7-deazaguanosine). The polypeptide is Queuine tRNA-ribosyltransferase (Serratia proteamaculans (strain 568)).